A 297-amino-acid chain; its full sequence is Light-independent protochlorophyllide reductase iron-sulfur ATP-binding protein (297 aa).

ATP contacts are provided by residues G41 to T46 and K70. Residue S45 coordinates Mg(2+). [4Fe-4S] cluster-binding residues include C126 and C160. ATP contacts are provided by residues N211 to R212 and P235 to L237.

The protein belongs to the NifH/BchL/ChlL family. Homodimer. Protochlorophyllide reductase is composed of three subunits; BchL, BchN and BchB. It depends on [4Fe-4S] cluster as a cofactor.

It catalyses the reaction chlorophyllide a + oxidized 2[4Fe-4S]-[ferredoxin] + 2 ADP + 2 phosphate = protochlorophyllide a + reduced 2[4Fe-4S]-[ferredoxin] + 2 ATP + 2 H2O. The protein operates within porphyrin-containing compound metabolism; bacteriochlorophyll biosynthesis (light-independent). Functionally, component of the dark-operative protochlorophyllide reductase (DPOR) that uses Mg-ATP and reduced ferredoxin to reduce ring D of protochlorophyllide (Pchlide) to form chlorophyllide a (Chlide). This reaction is light-independent. The L component serves as a unique electron donor to the NB-component of the complex, and binds Mg-ATP. The polypeptide is Light-independent protochlorophyllide reductase iron-sulfur ATP-binding protein (Methylorubrum extorquens (strain CM4 / NCIMB 13688) (Methylobacterium extorquens)).